The sequence spans 350 residues: uncharacterized protein (350 aa).

Functionally, may play a role in septum formation. This is an uncharacterized protein from Mycobacterium tuberculosis (strain CDC 1551 / Oshkosh).